The primary structure comprises 496 residues: Lysine--tRNA ligase (496 aa).

The Mg(2+) site is built by glutamate 409 and glutamate 416.

Belongs to the class-II aminoacyl-tRNA synthetase family. In terms of assembly, homodimer. Mg(2+) serves as cofactor.

It is found in the cytoplasm. The enzyme catalyses tRNA(Lys) + L-lysine + ATP = L-lysyl-tRNA(Lys) + AMP + diphosphate. The protein is Lysine--tRNA ligase of Streptococcus pneumoniae serotype 19F (strain G54).